Consider the following 397-residue polypeptide: Alanine racemase, biosynthetic (397 aa).

K42 functions as the Proton acceptor; specific for D-alanine in the catalytic mechanism. K42 carries the N6-(pyridoxal phosphate)lysine modification. R136 is a binding site for substrate. Residue Y257 is the Proton acceptor; specific for L-alanine of the active site. Substrate is bound at residue M305. The tract at residues 373-397 is disordered; it reads ANRPTEAMSNPSRAKSRPMDKQALI.

The protein belongs to the alanine racemase family. Pyridoxal 5'-phosphate is required as a cofactor.

The catalysed reaction is L-alanine = D-alanine. It functions in the pathway amino-acid biosynthesis; D-alanine biosynthesis; D-alanine from L-alanine: step 1/1. Its pathway is cell wall biogenesis; peptidoglycan biosynthesis. Its function is as follows. Catalyzes the interconversion of L-alanine and D-alanine. Provides the D-alanine required for cell wall biosynthesis. The chain is Alanine racemase, biosynthetic (alr) from Mesorhizobium japonicum (strain LMG 29417 / CECT 9101 / MAFF 303099) (Mesorhizobium loti (strain MAFF 303099)).